The primary structure comprises 82 residues: MAEVSSAPVRRPFHRRRKTCPFSGANAPRIDYKDVRLLQRYISERGKIVPSRITAVSQKKQRELAQAIKRARFLGLLPYVVS.

This sequence belongs to the bacterial ribosomal protein bS18 family. In terms of assembly, part of the 30S ribosomal subunit. Forms a tight heterodimer with protein bS6.

In terms of biological role, binds as a heterodimer with protein bS6 to the central domain of the 16S rRNA, where it helps stabilize the platform of the 30S subunit. This chain is Small ribosomal subunit protein bS18, found in Sinorhizobium fredii (strain NBRC 101917 / NGR234).